Here is a 130-residue protein sequence, read N- to C-terminus: Small ribosomal subunit protein uS11c (130 aa).

Belongs to the universal ribosomal protein uS11 family. Part of the 30S ribosomal subunit.

It is found in the plastid. It localises to the chloroplast. In Psilotum nudum (Whisk fern), this protein is Small ribosomal subunit protein uS11c.